We begin with the raw amino-acid sequence, 367 residues long: Tubulin-like protein CetZ (367 aa).

Residues 11–15 (QCGNR), Ser111, 115–117 (GTG), Glu148, Asn176, and Asn194 contribute to the GTP site.

It belongs to the CetZ family.

The protein resides in the cytoplasm. Its function is as follows. Involved in cell shape control. This chain is Tubulin-like protein CetZ, found in Methanothrix thermoacetophila (strain DSM 6194 / JCM 14653 / NBRC 101360 / PT) (Methanosaeta thermophila).